We begin with the raw amino-acid sequence, 341 residues long: Ketol-acid reductoisomerase (NADP(+)) (341 aa).

The KARI N-terminal Rossmann domain occupies Met1–Thr181. NADP(+) contacts are provided by residues Phe24–Gln27, Ser50, Ser52, and Asp82–Gln85. The active site involves His107. NADP(+) is bound at residue Gly133. In terms of domain architecture, KARI C-terminal knotted spans Thr182–Gly327. Asp190, Glu194, Glu226, and Glu230 together coordinate Mg(2+). Ser251 is a binding site for substrate.

The protein belongs to the ketol-acid reductoisomerase family. Requires Mg(2+) as cofactor.

The catalysed reaction is (2R)-2,3-dihydroxy-3-methylbutanoate + NADP(+) = (2S)-2-acetolactate + NADPH + H(+). It catalyses the reaction (2R,3R)-2,3-dihydroxy-3-methylpentanoate + NADP(+) = (S)-2-ethyl-2-hydroxy-3-oxobutanoate + NADPH + H(+). It functions in the pathway amino-acid biosynthesis; L-isoleucine biosynthesis; L-isoleucine from 2-oxobutanoate: step 2/4. Its pathway is amino-acid biosynthesis; L-valine biosynthesis; L-valine from pyruvate: step 2/4. Involved in the biosynthesis of branched-chain amino acids (BCAA). Catalyzes an alkyl-migration followed by a ketol-acid reduction of (S)-2-acetolactate (S2AL) to yield (R)-2,3-dihydroxy-isovalerate. In the isomerase reaction, S2AL is rearranged via a Mg-dependent methyl migration to produce 3-hydroxy-3-methyl-2-ketobutyrate (HMKB). In the reductase reaction, this 2-ketoacid undergoes a metal-dependent reduction by NADPH to yield (R)-2,3-dihydroxy-isovalerate. The polypeptide is Ketol-acid reductoisomerase (NADP(+)) (Rubrobacter xylanophilus (strain DSM 9941 / JCM 11954 / NBRC 16129 / PRD-1)).